Here is a 297-residue protein sequence, read N- to C-terminus: Molybdate/tungstate import ATP-binding protein WtpC (297 aa).

In terms of domain architecture, ABC transporter spans 2 to 226 (LKVNNLSKIW…PKNKKVAEFL (225 aa)). 32–39 (GPSGAGKS) contributes to the ATP binding site.

The protein belongs to the ABC transporter superfamily. Sulfate/tungstate importer (TC 3.A.1.6) family. In terms of assembly, the complex is composed of two ATP-binding proteins (WtpC), two transmembrane proteins (WtpB) and a solute-binding protein (WtpA).

The protein localises to the cell membrane. The catalysed reaction is tungstate(in) + ATP + H2O = tungstate(out) + ADP + phosphate + H(+). Its function is as follows. Part of the ABC transporter complex WtpABC involved in molybdate/tungstate import. Responsible for energy coupling to the transport system. The sequence is that of Molybdate/tungstate import ATP-binding protein WtpC (wtpC) from Methanocaldococcus jannaschii (strain ATCC 43067 / DSM 2661 / JAL-1 / JCM 10045 / NBRC 100440) (Methanococcus jannaschii).